The primary structure comprises 512 residues: Dihydroniloticin synthase CYP71CD1 (512 aa).

The helical transmembrane segment at 7–27 (YFTVTSLLVFLTFLLRLVWGW) threads the bilayer. Cys-451 contacts heme.

Belongs to the cytochrome P450 family. The cofactor is heme. As to expression, accumulates in mature fruits and in juice vesicles.

It is found in the membrane. It catalyses the reaction tirucalla-7,24-dien-3beta-ol + 2 reduced [NADPH--hemoprotein reductase] + 2 O2 = dihydroniloticin + 2 oxidized [NADPH--hemoprotein reductase] + 2 H2O + 2 H(+). Its pathway is secondary metabolite biosynthesis; terpenoid biosynthesis. Functionally, monooxygenase involved in the biosynthesis of limonoids triterpene natural products such as limonin, a compound with insecticidal activity responsible for the bitter taste in citrus. Catalyzes the conversion of tirucalladienol to dihydroniloticin. In Citrus sinensis (Sweet orange), this protein is Dihydroniloticin synthase CYP71CD1.